The primary structure comprises 238 residues: Ribosomal RNA small subunit methyltransferase G (238 aa).

S-adenosyl-L-methionine contacts are provided by residues Gly77, Phe82, 128–129, and Arg147; that span reads AE.

The protein belongs to the methyltransferase superfamily. RNA methyltransferase RsmG family.

The protein resides in the cytoplasm. Functionally, specifically methylates the N7 position of guanine in position 535 of 16S rRNA. This chain is Ribosomal RNA small subunit methyltransferase G, found in Listeria monocytogenes serotype 4b (strain F2365).